The sequence spans 355 residues: Histidinol-phosphate aminotransferase (355 aa).

N6-(pyridoxal phosphate)lysine is present on K218.

It belongs to the class-II pyridoxal-phosphate-dependent aminotransferase family. Histidinol-phosphate aminotransferase subfamily. In terms of assembly, homodimer. The cofactor is pyridoxal 5'-phosphate.

The enzyme catalyses L-histidinol phosphate + 2-oxoglutarate = 3-(imidazol-4-yl)-2-oxopropyl phosphate + L-glutamate. Its pathway is amino-acid biosynthesis; L-histidine biosynthesis; L-histidine from 5-phospho-alpha-D-ribose 1-diphosphate: step 7/9. The polypeptide is Histidinol-phosphate aminotransferase (Chlorobaculum parvum (strain DSM 263 / NCIMB 8327) (Chlorobium vibrioforme subsp. thiosulfatophilum)).